The chain runs to 492 residues: Membrane-bound lytic murein transglycosylase F (492 aa).

Positions 1 to 18 (MKGLFLRIIAIVALLLWA) are cleaved as a signal peptide. Residues 19-268 (IDMVFPWQQI…RIEEKYFNHL (250 aa)) are non-LT domain. Residues 270–492 (QFDYVDTRSY…DTLATTVTTQ (223 aa)) are LT domain. The active site involves Glu-313.

The protein in the N-terminal section; belongs to the bacterial solute-binding protein 3 family. It in the C-terminal section; belongs to the transglycosylase Slt family.

The protein localises to the cell outer membrane. The catalysed reaction is Exolytic cleavage of the (1-&gt;4)-beta-glycosidic linkage between N-acetylmuramic acid (MurNAc) and N-acetylglucosamine (GlcNAc) residues in peptidoglycan, from either the reducing or the non-reducing ends of the peptidoglycan chains, with concomitant formation of a 1,6-anhydrobond in the MurNAc residue.. Its function is as follows. Murein-degrading enzyme that degrades murein glycan strands and insoluble, high-molecular weight murein sacculi, with the concomitant formation of a 1,6-anhydromuramoyl product. Lytic transglycosylases (LTs) play an integral role in the metabolism of the peptidoglycan (PG) sacculus. Their lytic action creates space within the PG sacculus to allow for its expansion as well as for the insertion of various structures such as secretion systems and flagella. The polypeptide is Membrane-bound lytic murein transglycosylase F (Pasteurella multocida (strain Pm70)).